A 1300-amino-acid chain; its full sequence is Serine protease EspP (1300 aa).

The first 55 residues, 1–55 (MNKIYSLKYSHITGGLIAVSELSGRVSSRATGKKKHKRILALCFLGLLQSSYSFA), serve as a signal peptide directing secretion. Residues 57 to 311 (QMDISNFYIR…NQTTIDNLKN (255 aa)) enclose the Peptidase S6 domain. Residues His-127, Asp-156, and Ser-263 each act as charge relay system in the active site. Positions 1034–1300 (DINGEAGAWA…AVNANFRYSF (267 aa)) constitute an Autotransporter domain.

In terms of processing, cleaved to release the mature protein from the outer membrane.

It localises to the periplasm. It is found in the secreted. The protein localises to the cell surface. Its subcellular location is the cell outer membrane. With respect to regulation, inhibition of cytotoxic activity by phenylmethylsulfonyl fluoride. Functionally, serine protease capable of cleaving pepsin A and human coagulation factor V, which may contribute to the mucosal hemorrhage observed in hemorrhagic colitis. The chain is Serine protease EspP (espP) from Escherichia coli O157:H7.